The primary structure comprises 163 residues: Neurotrophin-3 (163 aa).

An N-terminal signal peptide occupies residues 1–3; sequence IQS. A propeptide spanning residues 4–119 is cleaved from the precursor; sequence TSMDQGILTE…VLNRTSRRKR (116 aa). The tract at residues 35-61 is disordered; the sequence is KQTARTKDGTQTTVKKSEAEADATASQ. An N-linked (GlcNAc...) asparagine glycan is attached at Asn-112.

Belongs to the NGF-beta family.

It is found in the secreted. Seems to promote the survival of visceral and proprioceptive sensory neurons. The protein is Neurotrophin-3 (NTF3) of Corallus caninus (Emerald tree boa).